Consider the following 389-residue polypeptide: Probable protein phosphatase 2C 47 (389 aa).

In terms of domain architecture, PPM-type phosphatase spans arginine 76–phenylalanine 346. Mn(2+) is bound by residues aspartate 120, glycine 121, aspartate 294, and aspartate 337.

Belongs to the PP2C family. The cofactor is Mg(2+). Mn(2+) serves as cofactor.

It catalyses the reaction O-phospho-L-seryl-[protein] + H2O = L-seryl-[protein] + phosphate. The catalysed reaction is O-phospho-L-threonyl-[protein] + H2O = L-threonyl-[protein] + phosphate. The protein is Probable protein phosphatase 2C 47 of Oryza sativa subsp. japonica (Rice).